A 254-amino-acid polypeptide reads, in one-letter code: TLC domain-containing protein At5g14285 (254 aa).

Helical transmembrane passes span 12–32 (DLPIFFSMFLTIYLIAYFIVF), 45–65 (SCLISIFHGSPAVFLATRAVF), 82–101 (TVLDFSVAYFLTDLFHYIVF), 124–144 (FLVFHGACAILGLLILAEVTS), 172–192 (LSPPFYAFYSIVRGVLGPLFF), and 211–231 (WLWISWAIVVGIAITVSILWI). Positions 38–248 (QIRPEASSCL…FSERKANKIR (211 aa)) constitute a TLC domain.

The protein resides in the membrane. The sequence is that of TLC domain-containing protein At5g14285 from Arabidopsis thaliana (Mouse-ear cress).